The following is a 464-amino-acid chain: Type I restriction enzyme EcoKI specificity subunit (464 aa).

This sequence belongs to the type-I restriction system S methylase family. The type I restriction/modification system is composed of three polypeptides R, M and S. The restriction enzyme has stoichiometry R(2)M(2)S(1). The methyltransferase is composed of M(2)S(1). In terms of assembly, (Microbial infection) Interacts with Escherichia phage T7 protein Ocr; this interaction leads to the inhibition of the methyltransferase restriction enzyme M.EcoKI composed of M(2)S(1).

Its function is as follows. The specificity (S) subunit of a type I restriction enzyme; this subunit dictates DNA sequence specificity. The M and S subunits together form a methyltransferase (MTase) that methylates A-2 on the top and A-3 on the bottom strand of the sequence 5'-AACN(6)GTGC-3'. In the presence of the R subunit the complex can also act as an endonuclease, binding to the same target sequence but cutting the DNA some distance from this site. Whether the DNA is cut or modified depends on the methylation state of the target sequence. When the target site is unmodified, the DNA is cut. When the target site is hemimethylated, the complex acts as a maintenance MTase modifying the DNA so that both strands become methylated. After locating a non-methylated recognition site, the enzyme complex serves as a molecular motor that translocates DNA in an ATP-dependent manner until a collision occurs that triggers cleavage. The sequence is that of Type I restriction enzyme EcoKI specificity subunit from Escherichia coli (strain K12).